The sequence spans 223 residues: uncharacterized protein (223 aa).

Helical transmembrane passes span 1–21 and 45–65; these read MLII…TFYL and ILIG…TSLI.

It localises to the cell membrane. This is an uncharacterized protein from Haemophilus influenzae (strain ATCC 51907 / DSM 11121 / KW20 / Rd).